A 963-amino-acid polypeptide reads, in one-letter code: Phosphoenolpyruvate carboxylase 2 (963 aa).

Residue Ser11 is modified to Phosphoserine. Residues His172 and Lys599 contribute to the active site. Residue Ser701 is modified to Phosphoserine.

The protein belongs to the PEPCase type 1 family. Homotetramer. Requires Mg(2+) as cofactor. Expressed in all plant organs, with higher levels in stems and leaves.

It localises to the cytoplasm. It catalyses the reaction oxaloacetate + phosphate = phosphoenolpyruvate + hydrogencarbonate. With respect to regulation, by light-reversible phosphorylation. In terms of biological role, through the carboxylation of phosphoenolpyruvate (PEP) it forms oxaloacetate, a four-carbon dicarboxylic acid source for the tricarboxylic acid cycle. The protein is Phosphoenolpyruvate carboxylase 2 (PPC2) of Arabidopsis thaliana (Mouse-ear cress).